We begin with the raw amino-acid sequence, 208 residues long: Small ribosomal subunit protein uS9c (208 aa).

A chloroplast-targeting transit peptide spans 1 to 52 (MASITNLASSLSSLSFSSQVSQRPNTISFPRANSVFALPAKSARRASLSITA).

Belongs to the universal ribosomal protein uS9 family.

It is found in the plastid. Its subcellular location is the chloroplast. Binds directly to 16S ribosomal RNA. This Arabidopsis thaliana (Mouse-ear cress) protein is Small ribosomal subunit protein uS9c (RPS9).